A 179-amino-acid polypeptide reads, in one-letter code: uncharacterized protein (179 aa).

This is an uncharacterized protein from Sulfolobus islandicus rod-shaped virus 1 (SIRV-1).